The following is a 265-amino-acid chain: Urease accessory protein UreH (265 aa).

Belongs to the UreD family. As to quaternary structure, ureH, UreF and UreG form a complex that acts as a GTP-hydrolysis-dependent molecular chaperone, activating the urease apoprotein by helping to assemble the nickel containing metallocenter of UreC. The UreE protein probably delivers the nickel.

It localises to the cytoplasm. Functionally, required for maturation of urease via the functional incorporation of the urease nickel metallocenter. The chain is Urease accessory protein UreH from Helicobacter pylori (strain HPAG1).